The chain runs to 196 residues: Peptidyl-tRNA hydrolase (196 aa).

Tyrosine 19 contacts tRNA. The active-site Proton acceptor is histidine 24. TRNA is bound by residues tyrosine 68, asparagine 70, and asparagine 116.

It belongs to the PTH family. In terms of assembly, monomer.

It is found in the cytoplasm. The enzyme catalyses an N-acyl-L-alpha-aminoacyl-tRNA + H2O = an N-acyl-L-amino acid + a tRNA + H(+). Functionally, hydrolyzes ribosome-free peptidyl-tRNAs (with 1 or more amino acids incorporated), which drop off the ribosome during protein synthesis, or as a result of ribosome stalling. Its function is as follows. Catalyzes the release of premature peptidyl moieties from peptidyl-tRNA molecules trapped in stalled 50S ribosomal subunits, and thus maintains levels of free tRNAs and 50S ribosomes. The protein is Peptidyl-tRNA hydrolase of Aromatoleum aromaticum (strain DSM 19018 / LMG 30748 / EbN1) (Azoarcus sp. (strain EbN1)).